A 388-amino-acid polypeptide reads, in one-letter code: Chorismate synthase (388 aa).

2 residues coordinate NADP(+): arginine 39 and arginine 45. FMN is bound by residues 130–132 (RSS), 251–252 (NA), glycine 296, 311–315 (KPIPT), and arginine 337.

Belongs to the chorismate synthase family. Homotetramer. FMNH2 is required as a cofactor.

The catalysed reaction is 5-O-(1-carboxyvinyl)-3-phosphoshikimate = chorismate + phosphate. Its pathway is metabolic intermediate biosynthesis; chorismate biosynthesis; chorismate from D-erythrose 4-phosphate and phosphoenolpyruvate: step 7/7. Catalyzes the anti-1,4-elimination of the C-3 phosphate and the C-6 proR hydrogen from 5-enolpyruvylshikimate-3-phosphate (EPSP) to yield chorismate, which is the branch point compound that serves as the starting substrate for the three terminal pathways of aromatic amino acid biosynthesis. This reaction introduces a second double bond into the aromatic ring system. In Streptococcus thermophilus (strain CNRZ 1066), this protein is Chorismate synthase.